The primary structure comprises 209 residues: Glycerol-3-phosphate acyltransferase (209 aa).

5 consecutive transmembrane segments (helical) span residues 13–33 (ALIA…GLLL), 63–83 (LAAA…LIAQ), 94–114 (PGLL…WLGF), 127–147 (LLGI…SIAF), and 151–171 (YSSL…WILG).

The protein belongs to the PlsY family. As to quaternary structure, probably interacts with PlsX.

The protein localises to the cell inner membrane. The enzyme catalyses an acyl phosphate + sn-glycerol 3-phosphate = a 1-acyl-sn-glycero-3-phosphate + phosphate. The protein operates within lipid metabolism; phospholipid metabolism. In terms of biological role, catalyzes the transfer of an acyl group from acyl-phosphate (acyl-PO(4)) to glycerol-3-phosphate (G3P) to form lysophosphatidic acid (LPA). This enzyme utilizes acyl-phosphate as fatty acyl donor, but not acyl-CoA or acyl-ACP. This chain is Glycerol-3-phosphate acyltransferase, found in Allorhizobium ampelinum (strain ATCC BAA-846 / DSM 112012 / S4) (Agrobacterium vitis (strain S4)).